The chain runs to 383 residues: Probable lipid transporter atnI (383 aa).

Helical transmembrane passes span 46–66 and 71–91; these read VLFS…AIMF and AWVV…RSLF. A glycan (N-linked (GlcNAc...) asparagine) is linked at N94. 5 consecutive transmembrane segments (helical) span residues 104–124, 144–164, 182–202, 231–251, and 269–289; these read FTIF…MTLG, FGHI…VGAA, IYMG…GLFI, WLFY…IFRL, and WFEY…LNVA. The disordered stretch occupies residues 305-383; the sequence is VSRKEKKQRK…YDNRGNEVRP (79 aa). The segment covering 307-316 has biased composition (basic residues); the sequence is RKEKKQRKRE. Residues 317-329 show a composition bias toward basic and acidic residues; it reads KKEAKIAEKEAKK.

It belongs to the lipid-translocating exporter (LTE) (TC 9.A.26.1) family.

It is found in the membrane. The protein operates within secondary metabolite biosynthesis. Its function is as follows. Probable lipid transporter; part of the gene cluster that mediates the biosynthesis of aspercryptins, linear lipopeptides built from six amino acids including 2 highly unusual and nonproteogenic amino acids, 2-amino-octanoic acid (2aoa) and 2-amino-dodecanol (2adol). The core structure of aspercryptins is as follows: Ser/Ala-Thr-Ile/Val-2aoa-Asn-2adol. The first step of aspercryptin biosynthesis is the generation of the fatty acid precursors, octanoic and dodecanoic acids, by the FAS subunits atnF and atnM. The fatty acid precursors are likely transformed into the corresponding alpha-amino fatty acids in three steps. First, they are hydroxylated by the cytochrome P450 monooxygenase atnE, then oxidized to the corresponding alpha-keto acids by the NAD(P)-dependent oxidoreductase atnD, and finally converted to the alpha-amino fatty acids by the PLP-dependent aminotransferases atnH or atnJ. the alpha-amino fatty acids, 2-amino-octanoic and 2-amino-dodecanoic acids, are recognized, activated, and covalently tethered to the NRPS atnA by its fourth and sixth adenylation domains. The second module of atnA is the Thr module and contains an epimerase (E) domain responsible for the epimerization of Thr to D-allo-Thr. Additionally, despite atnA having only one epimerase domain, the first amino acid of aspercryptin A1 is D-Ser, suggesting that serine is either loaded directly as D-Ser on the first module or that the epimerase domain in the threonine module epimerizes both L-Ser and L-Thr. After condensation of the hexapeptide of aspercryptin, the C-terminal reductase (TE) domain might be involved in the reductive release and production of the aldehyde hexapeptide. Further reduction would generate aspercryptins. The variety of aspercryptins produced reflects the flexibility of the atnA NRPS, allowing incorporation of alanine instead of serine, valine for isoleucine, and a C10 fatty amino alcohol instead of the C12 version. AtnB seems to be involved in the selectivity for Ile versus Val by the third module. Moreover, type B, C and D aspercryptins have an additional N-terminal cichorine, acetyl and propionyl group respectively. This Emericella nidulans (strain FGSC A4 / ATCC 38163 / CBS 112.46 / NRRL 194 / M139) (Aspergillus nidulans) protein is Probable lipid transporter atnI.